Reading from the N-terminus, the 702-residue chain is Zinc finger CCCH domain-containing protein 62 (702 aa).

The tract at residues 1–77 (MAAPAADDDD…SYDDPTFDPA (77 aa)) is disordered. Residues 18-54 (EEDDGEEEEGSEEEVESDDEEEEEGEGYDWSEEDDPE) show a composition bias toward acidic residues. In terms of domain architecture, SAP spans 132-166 (LEKLKVYECKAYLRMHKLRLSGNKEVLLTRIRGQI). Disordered stretches follow at residues 288 to 349 (EKHA…NTVQ), 405 to 532 (SRTS…QQQP), 546 to 602 (GGTS…RETH), and 634 to 673 (QMSQ…NPQR). Basic and acidic residues predominate over residues 298-325 (KTREVRIKDKENERMRRLNRNKENKSKG). Composition is skewed to polar residues over residues 326-349 (QDNM…NTVQ) and 405-419 (SRTS…QAPS). Residues 430–448 (QQQQQQQPPKSIKPAPIQQ) are compositionally biased toward low complexity. 4 stretches are compositionally biased toward polar residues: residues 472–502 (SQEQ…QHGG), 522–532 (QQAVSYTQQQP), 546–565 (GGTS…NWGS), and 575–591 (PFTQ…NGSG). Residues 674–702 (FRPWKPCFIYQQQGWCPYGENCKFMHDLR) form a C3H1-type zinc finger.

The protein is Zinc finger CCCH domain-containing protein 62 of Oryza sativa subsp. japonica (Rice).